Consider the following 296-residue polypeptide: Cutinase est1 (296 aa).

Positions 1-35 (MSVTTPRREASLLSRAVAVAAAAAATVALAAPAQA) are cleaved as a signal peptide. Residues 36-57 (ANPYERGPNPTESMLEARSGPF) are disordered. Tyrosine 95 lines the poly(ethylene terephthalate) pocket. Serine 165 acts as the Nucleophile in catalysis. Positions 166 and 190 each coordinate poly(ethylene terephthalate). Catalysis depends on charge relay system residues aspartate 211 and histidine 243. Cysteine 276 and cysteine 294 are disulfide-bonded.

It belongs to the AB hydrolase superfamily. As to quaternary structure, monomer.

It is found in the secreted. The protein localises to the periplasm. It catalyses the reaction (ethylene terephthalate)(n) + H2O = (ethylene terephthalate)(n-1) + 4-[(2-hydroxyethoxy)carbonyl]benzoate + H(+). It carries out the reaction a butanoate ester + H2O = an aliphatic alcohol + butanoate + H(+). The catalysed reaction is cutin + H2O = cutin monomers.. Catalyzes the hydrolysis of cutin, a polyester that forms the structure of plant cuticle. Shows esterase activity towards p-nitrophenol-linked aliphatic esters (pNP-aliphatic esters). Capable of degrading the plastic poly(ethylene terephthalate) (PET), the most abundant polyester plastic in the world. Can also depolymerize the synthetic polyester poly(epsilon-caprolactone) (PCL). In Thermobifida alba (Thermomonospora alba), this protein is Cutinase est1.